The sequence spans 300 residues: MDKIFESLYKAGCDVRMFEKLSCHTSIKIGGRVKYLVLPNDVFSLERAITVLKDFPFQIMGLGTNLLVQDEDLDIAVLKTERLNQIEIKGEKVLVESGTPLKRLCLFLMEAELGGLEFAYGIPGSVGGAIFMNAGAYGGEIGEFIEAVEVLKDGRKIWLSKNEIFFGYRDSTFKREKLIITRAMMSFKKEKKETIKAKMEDYMRRRLEKQPLDLPSAGSVFKRPREDFYVGKAIESLGLKGYRIGGAQISEKHAGFIVNTGSATFDDVMKLIEFVRKKVKEKYGVELETEVEIWWNGRQW.

Residues 28–190 (KIGGRVKYLV…TRAMMSFKKE (163 aa)) form the FAD-binding PCMH-type domain. The active site involves arginine 169. The active-site Proton donor is the serine 219. The active site involves glutamate 290.

The protein belongs to the MurB family. It depends on FAD as a cofactor.

Its subcellular location is the cytoplasm. The enzyme catalyses UDP-N-acetyl-alpha-D-muramate + NADP(+) = UDP-N-acetyl-3-O-(1-carboxyvinyl)-alpha-D-glucosamine + NADPH + H(+). Its pathway is cell wall biogenesis; peptidoglycan biosynthesis. Functionally, cell wall formation. This Thermotoga sp. (strain RQ2) protein is UDP-N-acetylenolpyruvoylglucosamine reductase.